We begin with the raw amino-acid sequence, 429 residues long: Enolase (429 aa).

Residue Gln-162 participates in (2R)-2-phosphoglycerate binding. The active-site Proton donor is the Glu-204. Asp-241, Glu-283, and Asp-310 together coordinate Mg(2+). (2R)-2-phosphoglycerate contacts are provided by Lys-335, Arg-364, Ser-365, and Lys-386. The active-site Proton acceptor is Lys-335.

It belongs to the enolase family. Mg(2+) serves as cofactor.

The protein localises to the cytoplasm. The protein resides in the secreted. It is found in the cell surface. It carries out the reaction (2R)-2-phosphoglycerate = phosphoenolpyruvate + H2O. It functions in the pathway carbohydrate degradation; glycolysis; pyruvate from D-glyceraldehyde 3-phosphate: step 4/5. Its function is as follows. Catalyzes the reversible conversion of 2-phosphoglycerate (2-PG) into phosphoenolpyruvate (PEP). It is essential for the degradation of carbohydrates via glycolysis. The sequence is that of Enolase from Mycobacterium tuberculosis (strain ATCC 25177 / H37Ra).